The primary structure comprises 306 residues: tRNA-cytidine(32) 2-sulfurtransferase (306 aa).

Positions 1-25 are disordered; it reads MSAVISLPDPQPRAARDPRVAEREQ. A compositionally biased stretch (basic and acidic residues) spans 14–25; the sequence is AARDPRVAEREQ. The PP-loop motif signature appears at 57-62; the sequence is SGGKDS. Residues Cys-132, Cys-135, and Cys-223 each coordinate [4Fe-4S] cluster. Positions 286-306 are disordered; it reads AHAWLAGSPADADADPETPTV. Residues 297–306 show a composition bias toward acidic residues; it reads ADADPETPTV.

Belongs to the TtcA family. As to quaternary structure, homodimer. Requires Mg(2+) as cofactor. The cofactor is [4Fe-4S] cluster.

Its subcellular location is the cytoplasm. It carries out the reaction cytidine(32) in tRNA + S-sulfanyl-L-cysteinyl-[cysteine desulfurase] + AH2 + ATP = 2-thiocytidine(32) in tRNA + L-cysteinyl-[cysteine desulfurase] + A + AMP + diphosphate + H(+). Its pathway is tRNA modification. Functionally, catalyzes the ATP-dependent 2-thiolation of cytidine in position 32 of tRNA, to form 2-thiocytidine (s(2)C32). The sulfur atoms are provided by the cysteine/cysteine desulfurase (IscS) system. This Stenotrophomonas maltophilia (strain K279a) protein is tRNA-cytidine(32) 2-sulfurtransferase.